The primary structure comprises 52 residues: Large ribosomal subunit protein bL32c (52 aa).

It belongs to the bacterial ribosomal protein bL32 family.

It is found in the plastid. The protein resides in the chloroplast. The polypeptide is Large ribosomal subunit protein bL32c (Lobularia maritima (Sweet alyssum)).